The following is a 368-amino-acid chain: tRNA/tmRNA (uracil-C(5))-methyltransferase (368 aa).

S-adenosyl-L-methionine contacts are provided by glutamine 190, tyrosine 218, asparagine 223, glutamate 239, and aspartate 301. Residue cysteine 326 is the Nucleophile of the active site. Glutamate 360 serves as the catalytic Proton acceptor.

This sequence belongs to the class I-like SAM-binding methyltransferase superfamily. RNA M5U methyltransferase family. TrmA subfamily.

The enzyme catalyses uridine(54) in tRNA + S-adenosyl-L-methionine = 5-methyluridine(54) in tRNA + S-adenosyl-L-homocysteine + H(+). It carries out the reaction uridine(341) in tmRNA + S-adenosyl-L-methionine = 5-methyluridine(341) in tmRNA + S-adenosyl-L-homocysteine + H(+). In terms of biological role, dual-specificity methyltransferase that catalyzes the formation of 5-methyluridine at position 54 (m5U54) in all tRNAs, and that of position 341 (m5U341) in tmRNA (transfer-mRNA). This Aliivibrio fischeri (strain MJ11) (Vibrio fischeri) protein is tRNA/tmRNA (uracil-C(5))-methyltransferase.